Here is a 435-residue protein sequence, read N- to C-terminus: F-box/FBD/LRR-repeat protein At1g51370 (435 aa).

An F-box domain is found at 18 to 64 (EDRISQLPEPLISEILFHLSTKDSVRTSALSTKWRYLWQSVPGLDLD). LRR repeat units follow at residues 123 to 148 (VHCFHDNKIPLSIYTCTTLVHLRLRW), 170 to 195 (VSYPNETTLQKLISGSPVLEELILFS), 234 to 259 (AKMYSTKNFQIISSGFPAKLDIDFVN), 262 to 287 (GRYQKKKVIEDILIDISRVRDLVISS), and 314 to 340 (RFYISDLEMLPTLLESCPKLESLILEM). In terms of domain architecture, FBD spans 354–406 (EPNVMVSTVPWCLVSSLKFVELKRSIPRYEGEMELVRYVLTNSTVLKKLRLNV).

This is F-box/FBD/LRR-repeat protein At1g51370 from Arabidopsis thaliana (Mouse-ear cress).